The primary structure comprises 464 residues: Cytoplasmic tRNA 2-thiolation protein 2 (464 aa).

It belongs to the CTU2/NCS2 family.

It is found in the cytoplasm. It participates in tRNA modification; 5-methoxycarbonylmethyl-2-thiouridine-tRNA biosynthesis. Functionally, plays a central role in 2-thiolation of mcm(5)S(2)U at tRNA wobble positions of tRNA(Lys), tRNA(Glu) and tRNA(Gln). May act by forming a heterodimer with NCS6/CTU1 that ligates sulfur from thiocarboxylated URM1 onto the uridine of tRNAs at wobble position. The polypeptide is Cytoplasmic tRNA 2-thiolation protein 2 (Oryza sativa subsp. japonica (Rice)).